Here is a 701-residue protein sequence, read N- to C-terminus: Meprin A subunit beta (701 aa).

The N-terminal stretch at 1 to 22 is a signal peptide; it reads MDLWNLSWFLFLDALLVISGLA. A propeptide spanning residues 23–61 is cleaved from the precursor; sequence TPENFDVDGGMDQDIFDINEGLGLDLFEGDIRLDRAQIR. Over 23–652 the chain is Extracellular; that stretch reads TPENFDVDGG…CEKRGSTRDT (630 aa). Residues 62–256 form the Peptidase M12A domain; sequence NSIIGEKYRW…LKLNQLYNCS (195 aa). Disulfide bonds link cysteine 103/cysteine 255, cysteine 124/cysteine 144, and cysteine 265/cysteine 427. Zn(2+) is bound at residue histidine 152. The active site involves glutamate 153. Positions 156 and 162 each coordinate Zn(2+). 8 N-linked (GlcNAc...) asparagine glycosylation sites follow: asparagine 218, asparagine 254, asparagine 370, asparagine 421, asparagine 436, asparagine 445, asparagine 547, and asparagine 592. An MAM domain is found at 260–429; sequence SFMDSCSFEL…INLSETRCPH (170 aa). Positions 430 to 585 constitute an MATH domain; the sequence is HIWHIRNFTQ…GDDVYILLTV (156 aa). Residue serine 593 is glycosylated (O-linked (GalNAc...) serine). 2 O-linked (GalNAc...) threonine glycosylation sites follow: threonine 594 and threonine 599. The interval 595-607 is required for proteolytic processing; that stretch reads QIQLTPAPSVQDL. An O-linked (GalNAc...) serine glycan is attached at serine 603. The 41-residue stretch at 604-644 folds into the EGF-like domain; the sequence is VQDLCSKTTCKNDGVCTVRDGKAECRCQSGEDWWYMGERCE. Intrachain disulfides connect cysteine 608–cysteine 619, cysteine 613–cysteine 628, and cysteine 630–cysteine 643. A helical membrane pass occupies residues 653 to 673; it reads IVIAVSSTVAVFALMLIITLV. The Cytoplasmic segment spans residues 674–701; sequence SVYCTRKKYRERMSSNRPNLTPQNQHAF. Residue threonine 694 is modified to Phosphothreonine.

As to quaternary structure, homotetramer consisting of disulfide-linked beta subunits, or heterotetramer of two alpha and two beta subunits formed by non-covalent association of two disulfide-linked heterodimers. Interacts with MBL2 through its carbohydrate moiety. This interaction may inhibit its catalytic activity. Interacts with TSPAN8. The cofactor is Zn(2+). Phosphorylated by PKC at multiple sites of its cytoplasmic part. Phosphorylation dcreases activity at the cell surface, leading to diminished substrate cleavage. In terms of processing, N-glycosylated; contains high mannose and/or complex biantennary structures. Post-translationally, O-glycosylation protect the C-terminal region from proteolytic cleavage and diminish secretion, this seems to be specific to human. Proteolytically activated by trypsin in the intestinal lumen and kallikrein-related peptidases in other tissues. As to expression, the major site of expression is the brush border membrane of small intestinal and kidney epithelial cells.

The protein resides in the cell membrane. It localises to the secreted. It carries out the reaction Hydrolysis of proteins, including azocasein, and peptides. Hydrolysis of 5-His-|-Leu-6, 6-Leu-|-Cys-7, 14-Ala-|-Leu-15 and 19-Cys-|-Gly-20 bonds in insulin B chain.. With respect to regulation, strongly inhibited by fetuin-A/AHSG. Functionally, membrane metallopeptidase that sheds many membrane-bound proteins. Exhibits a strong preference for acidic amino acids at the P1' position. Known substrates include: FGF19, VGFA, IL1B, IL18, procollagen I and III, E-cadherin, KLK7, gastrin, ADAM10, tenascin-C. The presence of several pro-inflammatory cytokine among substrates implicate MEP1B in inflammation. It is also involved in tissue remodeling due to its capability to degrade extracellular matrix components. Also cleaves the amyloid precursor protein/APP, thereby releasing neurotoxic amyloid beta peptides. The sequence is that of Meprin A subunit beta (MEP1B) from Homo sapiens (Human).